A 360-amino-acid chain; its full sequence is Histidinol-phosphate aminotransferase (360 aa).

An N6-(pyridoxal phosphate)lysine modification is found at Lys218.

It belongs to the class-II pyridoxal-phosphate-dependent aminotransferase family. Histidinol-phosphate aminotransferase subfamily. In terms of assembly, homodimer. The cofactor is pyridoxal 5'-phosphate.

The catalysed reaction is L-histidinol phosphate + 2-oxoglutarate = 3-(imidazol-4-yl)-2-oxopropyl phosphate + L-glutamate. The protein operates within amino-acid biosynthesis; L-histidine biosynthesis; L-histidine from 5-phospho-alpha-D-ribose 1-diphosphate: step 7/9. The protein is Histidinol-phosphate aminotransferase of Chlorobium phaeobacteroides (strain DSM 266 / SMG 266 / 2430).